The chain runs to 167 residues: Protein MIX23 (167 aa).

Residues 81 to 108 (QLDQDRNTSKSPLKSQQQLPSSSTTQVS) are disordered. Low complexity predominate over residues 89–106 (SKSPLKSQQQLPSSSTTQ).

The protein belongs to the MIX23 family.

This is Protein MIX23 (cid2) from Schizosaccharomyces pombe (strain 972 / ATCC 24843) (Fission yeast).